The following is a 435-amino-acid chain: E3 ubiquitin-protein ligase itt1 (435 aa).

An RWD domain is found at Asp16–Ala135. Positions Arg170–Leu420 are TRIAD supradomain. Zn(2+) is bound by residues Cys174, Cys177, Cys192, His194, Cys197, Cys200, Cys219, Cys224, Cys266, Cys271, Cys286, Cys289, Cys294, Cys297, His302, Cys308, Cys368, and Cys371. Residues Cys174–Cys224 form an RING-type 1 zinc finger. An IBR-type zinc finger spans residues Thr245 to Cys308. The segment at Cys368 to Cys396 adopts an RING-type 2; atypical zinc-finger fold. The active site involves Cys381. Cys386, Cys388, Cys393, Cys396, His408, and Cys416 together coordinate Zn(2+).

This sequence belongs to the RBR family. RNF14 subfamily.

The protein resides in the cytoplasm. It is found in the nucleus. The catalysed reaction is [E2 ubiquitin-conjugating enzyme]-S-ubiquitinyl-L-cysteine + [acceptor protein]-L-lysine = [E2 ubiquitin-conjugating enzyme]-L-cysteine + [acceptor protein]-N(6)-ubiquitinyl-L-lysine.. It participates in protein modification; protein ubiquitination. Its function is as follows. E3 ubiquitin-protein ligase involved in the rescue of stalled ribosomes by promoting ubiquitination and degradation of proteins on stalled ribosomes. Specifically required to resolve RNA-protein cross-links caused by reactive aldehydes, which trigger translation stress by stalling ribosomes: acts by catalying 'Lys-6'-linked ubiquitination of RNA-protein cross-links, leading to their degradation. The sequence is that of E3 ubiquitin-protein ligase itt1 (itt1) from Schizosaccharomyces pombe (strain 972 / ATCC 24843) (Fission yeast).